We begin with the raw amino-acid sequence, 292 residues long: Elongation factor Ts (292 aa).

The involved in Mg(2+) ion dislocation from EF-Tu stretch occupies residues 79–82 (TDFV).

The protein belongs to the EF-Ts family.

The protein localises to the cytoplasm. In terms of biological role, associates with the EF-Tu.GDP complex and induces the exchange of GDP to GTP. It remains bound to the aminoacyl-tRNA.EF-Tu.GTP complex up to the GTP hydrolysis stage on the ribosome. The sequence is that of Elongation factor Ts from Xanthomonas axonopodis pv. citri (strain 306).